Reading from the N-terminus, the 590-residue chain is Phenylalanine--tRNA ligase beta subunit (590 aa).

The 107-residue stretch at 276–382 (MELDVWDVPV…IMYNYDRFEP (107 aa)) folds into the B5 domain. 4 residues coordinate Mg(2+): asparagine 360, aspartate 366, glutamate 369, and aspartate 370.

The protein belongs to the phenylalanyl-tRNA synthetase beta subunit family. Type 2 subfamily. As to quaternary structure, tetramer of two alpha and two beta subunits. It depends on Mg(2+) as a cofactor.

Its subcellular location is the cytoplasm. The catalysed reaction is tRNA(Phe) + L-phenylalanine + ATP = L-phenylalanyl-tRNA(Phe) + AMP + diphosphate + H(+). This is Phenylalanine--tRNA ligase beta subunit from Methanopyrus kandleri (strain AV19 / DSM 6324 / JCM 9639 / NBRC 100938).